The primary structure comprises 491 residues: MEKWWFNSMLSNEKLEYRCGLSKSTDSPDPIENTSGSEDRVINNTDKNINNWSQIKSSSYSNVDHLFGIRDIRNFISDDTFLVRDRNGVSYFIYFDIENQIFEIDNDQSFLSELESFFYSYRNSSYLNNVNSSYLNNVSKSNHPHYDRYMYDTKYSWNKHINSCINNYILSGSNNYSDSYIYSYICGQSRTRSEHGSSSKQTSTNGSDLKSSNVLYVAQKYRHLWIQCENCYGLNYKKNLKSKINICEQCGYHLKMSSSDRIELSIDPGTWDPVDEDMVSLDPIEFHSGEEPYKERIDFYQRKTGLTEAVQTGTGQLNGIPVAIGVMDFQFMGGSMGSVVGEKITRLIEYATNEFLPLILVCSSGGARMQEGSLSLMQMAKISSALYDYQSNKKLFYVSILTSPTTGGVTASFGMLGDIIIAEPNSYIAFAGKRVIEQTLKKTVPEGSQAAEYLFHKGLFDPIVPRNTLKGVLSELFQLHAFFPLNPKKIK.

One can recognise a CoA carboxyltransferase N-terminal domain in the interval 224 to 491 (LWIQCENCYG…FFPLNPKKIK (268 aa)). 4 residues coordinate Zn(2+): Cys-228, Cys-231, Cys-247, and Cys-250. The C4-type zinc-finger motif lies at 228-250 (CENCYGLNYKKNLKSKINICEQC).

It belongs to the AccD/PCCB family. Acetyl-CoA carboxylase is a heterohexamer composed of biotin carboxyl carrier protein, biotin carboxylase and 2 subunits each of ACCase subunit alpha and ACCase plastid-coded subunit beta (accD). The cofactor is Zn(2+).

Its subcellular location is the plastid. It localises to the chloroplast stroma. It catalyses the reaction N(6)-carboxybiotinyl-L-lysyl-[protein] + acetyl-CoA = N(6)-biotinyl-L-lysyl-[protein] + malonyl-CoA. The protein operates within lipid metabolism; malonyl-CoA biosynthesis; malonyl-CoA from acetyl-CoA: step 1/1. In terms of biological role, component of the acetyl coenzyme A carboxylase (ACC) complex. Biotin carboxylase (BC) catalyzes the carboxylation of biotin on its carrier protein (BCCP) and then the CO(2) group is transferred by the transcarboxylase to acetyl-CoA to form malonyl-CoA. The sequence is that of Acetyl-coenzyme A carboxylase carboxyl transferase subunit beta, chloroplastic from Vitis vinifera (Grape).